Consider the following 243-residue polypeptide: Peptidyl-tRNA hydrolase (243 aa).

Tyr14 contacts tRNA. His19 acts as the Proton acceptor in catalysis. Residues Phe64, Asn66, and Asn112 each coordinate tRNA. A disordered region spans residues 188–243 (GGKAEEEKPRKDNKTTEKKPAGQSHIHQARNHNQPKVLTTGPMADILKKMFGNKGE). Over residues 190–207 (KAEEEKPRKDNKTTEKKP) the composition is skewed to basic and acidic residues.

This sequence belongs to the PTH family. Monomer.

Its subcellular location is the cytoplasm. It carries out the reaction an N-acyl-L-alpha-aminoacyl-tRNA + H2O = an N-acyl-L-amino acid + a tRNA + H(+). In terms of biological role, hydrolyzes ribosome-free peptidyl-tRNAs (with 1 or more amino acids incorporated), which drop off the ribosome during protein synthesis, or as a result of ribosome stalling. Catalyzes the release of premature peptidyl moieties from peptidyl-tRNA molecules trapped in stalled 50S ribosomal subunits, and thus maintains levels of free tRNAs and 50S ribosomes. This Rhizobium leguminosarum bv. trifolii (strain WSM2304) protein is Peptidyl-tRNA hydrolase.